The following is a 648-amino-acid chain: Bifunctional protein TilS/HprT (648 aa).

29–34 (SGGPDS) is a binding site for ATP. Asp-627 contacts Mg(2+).

It in the N-terminal section; belongs to the tRNA(Ile)-lysidine synthase family. This sequence in the C-terminal section; belongs to the purine/pyrimidine phosphoribosyltransferase family. Mg(2+) serves as cofactor.

It localises to the cytoplasm. It carries out the reaction IMP + diphosphate = hypoxanthine + 5-phospho-alpha-D-ribose 1-diphosphate. It catalyses the reaction GMP + diphosphate = guanine + 5-phospho-alpha-D-ribose 1-diphosphate. The catalysed reaction is cytidine(34) in tRNA(Ile2) + L-lysine + ATP = lysidine(34) in tRNA(Ile2) + AMP + diphosphate + H(+). Functionally, ligates lysine onto the cytidine present at position 34 of the AUA codon-specific tRNA(Ile) that contains the anticodon CAU, in an ATP-dependent manner. Cytidine is converted to lysidine, thus changing the amino acid specificity of the tRNA from methionine to isoleucine. This Listeria innocua serovar 6a (strain ATCC BAA-680 / CLIP 11262) protein is Bifunctional protein TilS/HprT (tilS/hprT).